Consider the following 798-residue polypeptide: uncharacterized protein (798 aa).

Low complexity predominate over residues methionine 1–serine 13. The N-terminal 58 residues, methionine 1–arginine 58, are a transit peptide targeting the chloroplast. Disordered stretches follow at residues methionine 1–alanine 99, alanine 135–threonine 158, and threonine 417–serine 473. The segment covering valine 35–phenylalanine 55 has biased composition (polar residues). The span at valine 57 to leucine 79 shows a compositional bias: basic and acidic residues. Positions lysine 137–alanine 146 are enriched in basic residues. The segment covering alanine 462 to serine 473 has biased composition (low complexity). Positions arginine 578–aspartate 658 form a coiled coil. The interval aspartate 749–aspartate 798 is disordered. Phosphoserine is present on serine 762. The segment covering lysine 789–aspartate 798 has biased composition (basic and acidic residues).

It is found in the plastid. The protein localises to the chloroplast. This is an uncharacterized protein from Arabidopsis thaliana (Mouse-ear cress).